Consider the following 878-residue polypeptide: Probable LRR receptor-like serine/threonine-protein kinase MEE39 (878 aa).

The N-terminal stretch at 1-25 is a signal peptide; it reads MKNLCWVFLSLFWFGVFLIIRFAEG. The Extracellular portion of the chain corresponds to 26–514; sequence QNQEGFISLD…IDKPKKKVAV (489 aa). N-linked (GlcNAc...) asparagine glycosylation is found at asparagine 183, asparagine 203, asparagine 235, asparagine 290, asparagine 404, asparagine 418, asparagine 445, and asparagine 466. LRR repeat units lie at residues 413–436, 437–458, and 461–483; these read RIIS…QNLA, HLES…FLAT, and SLLV…LRDR. Residues 515-535 traverse the membrane as a helical segment; the sequence is KVVAPVASIAAIVVVILLFVF. The Cytoplasmic portion of the chain corresponds to 536–878; it reads KKKMSSRNKP…FDTDVKPKAR (343 aa). Threonine 557 is subject to Phosphothreonine. Residues 566 to 840 form the Protein kinase domain; sequence KNLQRPLGEG…QVIINLKECL (275 aa). ATP-binding positions include 572 to 580 and lysine 594; that span reads LGEGGFGVV. Tyrosine 639 is subject to Phosphotyrosine. Aspartate 691 functions as the Proton acceptor in the catalytic mechanism. Serine 726 bears the Phosphoserine mark. Threonine 727 and threonine 732 each carry phosphothreonine. Residue tyrosine 740 is modified to Phosphotyrosine. Positions 849-869 are enriched in polar residues; the sequence is RNNQNMDSGHSSDQLNVTVTF. The segment at 849 to 878 is disordered; that stretch reads RNNQNMDSGHSSDQLNVTVTFDTDVKPKAR.

It belongs to the protein kinase superfamily. Ser/Thr protein kinase family.

The protein resides in the membrane. It catalyses the reaction L-seryl-[protein] + ATP = O-phospho-L-seryl-[protein] + ADP + H(+). The enzyme catalyses L-threonyl-[protein] + ATP = O-phospho-L-threonyl-[protein] + ADP + H(+). Receptor-like serine/threonine-kinase required during the endosperm development in seeds. This Arabidopsis thaliana (Mouse-ear cress) protein is Probable LRR receptor-like serine/threonine-protein kinase MEE39 (MEE39).